The chain runs to 348 residues: Sulfate/thiosulfate import ATP-binding protein CysA (348 aa).

An ABC transporter domain is found at 3–233 (ILIDNISKKF…PATPFVFSLL (231 aa)). 35–42 (GPSGSGKS) lines the ATP pocket.

It belongs to the ABC transporter superfamily. Sulfate/tungstate importer (TC 3.A.1.6) family.

The protein localises to the plastid. The protein resides in the chloroplast. It carries out the reaction sulfate(out) + ATP + H2O = sulfate(in) + ADP + phosphate + H(+). The enzyme catalyses thiosulfate(out) + ATP + H2O = thiosulfate(in) + ADP + phosphate + H(+). Part of the ABC transporter complex involved in sulfate/thiosulfate import. Responsible for energy coupling to the transport system. This Mesostigma viride (Green alga) protein is Sulfate/thiosulfate import ATP-binding protein CysA.